The following is a 498-amino-acid chain: uncharacterized protein (498 aa).

Residues 1-26 (MEESSMAQASLICLLLSFSIIMLSNA) form the signal peptide. The Extracellular segment spans residues 27–441 (ADISIDCGSS…GEEKSSSNLA (415 aa)). 4 N-linked (GlcNAc...) asparagine glycosylation sites follow: asparagine 44, asparagine 150, asparagine 354, and asparagine 357. Residues 351-439 (GSGNGTNSTS…KSGEEKSSSN (89 aa)) form a disordered region. The segment covering 362–414 (SGGGSPSPGGGSGSPPSTGGGSGSPPSTGGGGGSPSKGGGGGKSGGSNNGDGG) has biased composition (gly residues). A compositionally biased stretch (basic and acidic residues) spans 418–436 (ASEDEKSADSSGKSGEEKS). A helical membrane pass occupies residues 442–462 (LPLGISLPTLLSLGAGGWGVW). The Cytoplasmic segment spans residues 463 to 498 (KYFIKPRRHPESELPLKQNISLQVNMGNATVVNAGQ).

Its subcellular location is the membrane. This is an uncharacterized protein from Arabidopsis thaliana (Mouse-ear cress).